A 243-amino-acid polypeptide reads, in one-letter code: NAD-dependent protein deacetylase (243 aa).

The Deacetylase sirtuin-type domain occupies 1 to 243 (MKHDLETLKH…VSVVKSLMTE (243 aa)). The NAD(+) site is built by Ala-24, Phe-35, Arg-36, Gln-105, Ile-107, Asp-108, and His-123. Residue Phe-35 coordinates nicotinamide. Ile-107 and Asp-108 together coordinate nicotinamide. His-123 (proton acceptor) is an active-site residue. Zn(2+)-binding residues include Cys-131, Cys-134, Cys-151, and Cys-154. The NAD(+) site is built by Ser-192, Ser-193, Asn-215, and Asp-232.

This sequence belongs to the sirtuin family. Class U subfamily. Requires Zn(2+) as cofactor.

It localises to the cytoplasm. It carries out the reaction N(6)-acetyl-L-lysyl-[protein] + NAD(+) + H2O = 2''-O-acetyl-ADP-D-ribose + nicotinamide + L-lysyl-[protein]. Its function is as follows. NAD-dependent protein deacetylase which modulates the activities of several enzymes which are inactive in their acetylated form. The polypeptide is NAD-dependent protein deacetylase (Staphylococcus aureus (strain NCTC 8325 / PS 47)).